A 104-amino-acid polypeptide reads, in one-letter code: Small ribosomal subunit protein uS10 (104 aa).

This sequence belongs to the universal ribosomal protein uS10 family. As to quaternary structure, part of the 30S ribosomal subunit.

Involved in the binding of tRNA to the ribosomes. This is Small ribosomal subunit protein uS10 from Aliarcobacter butzleri (strain RM4018) (Arcobacter butzleri).